A 543-amino-acid chain; its full sequence is Cytochrome P450 1B1 (543 aa).

Residue Cys470 coordinates heme.

It belongs to the cytochrome P450 family. Requires heme as cofactor.

It localises to the endoplasmic reticulum membrane. It is found in the microsome membrane. The protein resides in the mitochondrion. It catalyses the reaction an organic molecule + reduced [NADPH--hemoprotein reductase] + O2 = an alcohol + oxidized [NADPH--hemoprotein reductase] + H2O + H(+). The enzyme catalyses 17beta-estradiol + reduced [NADPH--hemoprotein reductase] + O2 = 2-hydroxy-17beta-estradiol + oxidized [NADPH--hemoprotein reductase] + H2O + H(+). It carries out the reaction 17beta-estradiol + reduced [NADPH--hemoprotein reductase] + O2 = 4-hydroxy-17beta-estradiol + oxidized [NADPH--hemoprotein reductase] + H2O + H(+). The catalysed reaction is estrone + reduced [NADPH--hemoprotein reductase] + O2 = 2-hydroxyestrone + oxidized [NADPH--hemoprotein reductase] + H2O + H(+). It catalyses the reaction estrone + reduced [NADPH--hemoprotein reductase] + O2 = 4-hydroxyestrone + oxidized [NADPH--hemoprotein reductase] + H2O + H(+). The enzyme catalyses testosterone + reduced [NADPH--hemoprotein reductase] + O2 = 6beta,17beta-dihydroxyandrost-4-en-3-one + oxidized [NADPH--hemoprotein reductase] + H2O + H(+). It carries out the reaction progesterone + reduced [NADPH--hemoprotein reductase] + O2 = 6beta-hydroxyprogesterone + oxidized [NADPH--hemoprotein reductase] + H2O + H(+). The catalysed reaction is progesterone + reduced [NADPH--hemoprotein reductase] + O2 = 16alpha-hydroxyprogesterone + oxidized [NADPH--hemoprotein reductase] + H2O + H(+). It catalyses the reaction all-trans-retinol + reduced [NADPH--hemoprotein reductase] + O2 = all-trans-retinal + oxidized [NADPH--hemoprotein reductase] + 2 H2O + H(+). The enzyme catalyses all-trans-retinal + reduced [NADPH--hemoprotein reductase] + O2 = all-trans-retinoate + oxidized [NADPH--hemoprotein reductase] + H2O + 2 H(+). It carries out the reaction (5Z,8Z,11Z,14Z)-eicosatetraenoate + reduced [NADPH--hemoprotein reductase] + O2 = (8R,9S)-epoxy-(5Z,11Z,14Z)-eicosatrienoate + oxidized [NADPH--hemoprotein reductase] + H2O + H(+). The catalysed reaction is (5Z,8Z,11Z,14Z)-eicosatetraenoate + reduced [NADPH--hemoprotein reductase] + O2 = (11R,12S)-epoxy-(5Z,8Z,14Z)-eicosatrienoate + oxidized [NADPH--hemoprotein reductase] + H2O + H(+). It catalyses the reaction (5Z,8Z,11Z,14Z)-eicosatetraenoate + reduced [NADPH--hemoprotein reductase] + O2 = (11S,12R)-epoxy-(5Z,8Z,14Z)-eicosatrienoate + oxidized [NADPH--hemoprotein reductase] + H2O + H(+). The enzyme catalyses (5Z,8Z,11Z,14Z)-eicosatetraenoate + reduced [NADPH--hemoprotein reductase] + O2 = (14S,15R)-epoxy-(5Z,8Z,11Z)-eicosatrienoate + oxidized [NADPH--hemoprotein reductase] + H2O + H(+). It carries out the reaction (5Z,8Z,11Z,14Z)-eicosatetraenoate + reduced [NADPH--hemoprotein reductase] + O2 = (14R,15S)-epoxy-(5Z,8Z,11Z)-eicosatrienoate + oxidized [NADPH--hemoprotein reductase] + H2O + H(+). The catalysed reaction is (5S)-hydroperoxy-(6E,8Z,11Z,14Z)-eicosatetraenoate = 5-oxo-(6E,8Z,11Z,14Z)-eicosatetraenoate + H2O. It catalyses the reaction (12S)-hydroperoxy-(5Z,8Z,10E,14Z)-eicosatetraenoate = 12-oxo-(5Z,8Z,10E,14Z)-eicosatetraenoate + H2O. The enzyme catalyses (15S)-hydroperoxy-(5Z,8Z,11Z,13E)-eicosatetraenoate = 15-oxo-(5Z,8Z,11Z,13E)-eicosatetraenoate + H2O. It carries out the reaction (13S)-hydroperoxy-(9Z,11E)-octadecadienoate = 13-oxo-(9Z,11E)-octadecadienoate + H2O. Its pathway is steroid hormone biosynthesis. It participates in cofactor metabolism; retinol metabolism. The protein operates within lipid metabolism; arachidonate metabolism. Enzyme activity is increased by cytochrome b5. Enzyme activity is increased by liposomes containing anionic phospholipids, phosphatidic acid and cardiolipin. Inhibited by naringenin with an IC(50) of 5 uM. In terms of biological role, a cytochrome P450 monooxygenase involved in the metabolism of various endogenous substrates, including fatty acids, steroid hormones and vitamins. Mechanistically, uses molecular oxygen inserting one oxygen atom into a substrate, and reducing the second into a water molecule, with two electrons provided by NADPH via cytochrome P450 reductase (NADPH--hemoprotein reductase). Exhibits catalytic activity for the formation of hydroxyestrogens from 17beta-estradiol (E2), namely 2- and 4-hydroxy E2. Metabolizes testosterone and progesterone to B or D ring hydroxylated metabolites. May act as a major enzyme for all-trans retinoic acid biosynthesis in extrahepatic tissues. Catalyzes two successive oxidative transformation of all-trans retinol to all-trans retinal and then to the active form all-trans retinoic acid. Catalyzes the epoxidation of double bonds of certain PUFA. Converts arachidonic acid toward epoxyeicosatrienoic acid (EpETrE) regioisomers, 8,9-, 11,12-, and 14,15- EpETrE, that function as lipid mediators in the vascular system. Additionally, displays dehydratase activity toward oxygenated eicosanoids including hydroperoxyeicosatetraenoates (HpETEs). This activity is independent of cytochrome P450 reductase, NADPH, and O2. Also involved in the oxidative metabolism of xenobiotics, particularly converting polycyclic aromatic hydrocarbons and heterocyclic aryl amines procarcinogens to DNA-damaging products. Plays an important role in retinal vascular development. Under ambient/hyperoxic O2 conditions, promotes angiogenesis and capillary morphogenesis of retinal endothelial cells and pericytes, likely by metabolizing the oxygenated products symptomatic of oxidative stress. Also, contributes to oxidative homeostasis and ultrastructural organization and function of trabecular meshwork tissue through modulation of POSTN expression. The chain is Cytochrome P450 1B1 from Rattus norvegicus (Rat).